The following is a 322-amino-acid chain: MADVLTELPGVGPSTAEKLIEAGYLDFMKIATSTIGELTDIEGISEKAAAKMIMAARDLCDLGFKSGVELLRQRQSVWRLSTGSKELDTVLAGGLESQSVTEFAGMYGSGKTQIMHQSCVNLQIAGKIYADLEGVVEEELENPKAVYIDTEGTFRPERVVQMAEGLGIDGQLVLDNTFVARAYNSDMQMLFAEKIEDLIKSGNNIKLVIIDSLTSTFRNEFTGRGKLAERQQKLGRHMATLNKLADLYNCIVLVTNQVAAKPDAFFGVAEQAIGGHVVGHAATFRFFLRKSKGDKRVAKLYDSPHLPDSEAVFRITEKGIMD.

105-112 contributes to the ATP binding site; it reads GMYGSGKT.

The protein belongs to the eukaryotic RecA-like protein family.

Its function is as follows. Involved in DNA repair and in homologous recombination. Binds and assemble on single-stranded DNA to form a nucleoprotein filament. Hydrolyzes ATP in a ssDNA-dependent manner and promotes DNA strand exchange between homologous DNA molecules. This is DNA repair and recombination protein RadA from Methanococcus maripaludis (strain C6 / ATCC BAA-1332).